A 318-amino-acid polypeptide reads, in one-letter code: 3'-5' exoribonuclease YhaM (318 aa).

Residues 163-279 (HVVSMLDLAK…LHYIDNLDAK (117 aa)) enclose the HD domain.

It belongs to the YhaM family.

In terms of biological role, shows a 3'-5' exoribonuclease activity. This is 3'-5' exoribonuclease YhaM from Bacillus cytotoxicus (strain DSM 22905 / CIP 110041 / 391-98 / NVH 391-98).